Reading from the N-terminus, the 230-residue chain is Spliceosome-associated protein CWC15 homolog (230 aa).

Disordered regions lie at residues 1-157 (MTTA…EEKQ) and 164-183 (AGNP…GGDF). A compositionally biased stretch (polar residues) spans 25–34 (KLSNQYSSKD). Coiled-coil stretches lie at residues 47 to 82 (GQET…SASS) and 119 to 164 (DSDE…NILA). Positions 52–78 (ADLRKKDLRRELEDKERNAIREKRARD) are enriched in basic and acidic residues. Residues 104–125 (DADEAVDELNSSDDDDSDEDDT) are compositionally biased toward acidic residues. Residues 131-157 (ELEKIKKERAEEKAARDEEIKEKEEKQ) are compositionally biased toward basic and acidic residues.

It belongs to the CWC15 family. As to quaternary structure, component of spliceosomal complex.

The protein resides in the nucleus. In terms of biological role, component of a spliceosomal complex that is required for activating pre-mRNA splicing. The sequence is that of Spliceosome-associated protein CWC15 homolog from Caenorhabditis elegans.